The sequence spans 512 residues: Ribose import ATP-binding protein RbsA 1 (512 aa).

2 ABC transporter domains span residues F8 to E244 and A254 to A502. G40–S47 is an ATP binding site.

This sequence belongs to the ABC transporter superfamily. Ribose importer (TC 3.A.1.2.1) family. In terms of assembly, the complex is composed of an ATP-binding protein (RbsA), two transmembrane proteins (RbsC) and a solute-binding protein (RbsB).

It is found in the cell inner membrane. It catalyses the reaction D-ribose(out) + ATP + H2O = D-ribose(in) + ADP + phosphate + H(+). Its function is as follows. Part of the ABC transporter complex RbsABC involved in ribose import. Responsible for energy coupling to the transport system. The chain is Ribose import ATP-binding protein RbsA 1 from Rhizobium johnstonii (strain DSM 114642 / LMG 32736 / 3841) (Rhizobium leguminosarum bv. viciae).